A 207-amino-acid polypeptide reads, in one-letter code: Uracil phosphoribosyltransferase (207 aa).

Residues Arg-77, Arg-102, and Asp-129–Ser-137 contribute to the 5-phospho-alpha-D-ribose 1-diphosphate site. Uracil contacts are provided by residues Ile-192 and Gly-197–Ala-199. Asp-198 serves as a coordination point for 5-phospho-alpha-D-ribose 1-diphosphate.

It belongs to the UPRTase family. Requires Mg(2+) as cofactor.

It catalyses the reaction UMP + diphosphate = 5-phospho-alpha-D-ribose 1-diphosphate + uracil. It participates in pyrimidine metabolism; UMP biosynthesis via salvage pathway; UMP from uracil: step 1/1. With respect to regulation, allosterically activated by GTP. In terms of biological role, catalyzes the conversion of uracil and 5-phospho-alpha-D-ribose 1-diphosphate (PRPP) to UMP and diphosphate. This is Uracil phosphoribosyltransferase from Mycobacterium bovis (strain ATCC BAA-935 / AF2122/97).